Here is a 979-residue protein sequence, read N- to C-terminus: Translation initiation factor IF-2 (979 aa).

The interval valine 33–glutamate 391 is disordered. Low complexity-rich tracts occupy residues glutamine 54 to glutamine 63 and alanine 139 to alanine 150. Positions proline 151–threonine 166 are enriched in pro residues. A compositionally biased stretch (acidic residues) spans proline 234–threonine 252. Basic residues-rich tracts occupy residues proline 263–arginine 278 and threonine 294–proline 303. The segment covering glycine 314–leucine 328 has biased composition (polar residues). Basic and acidic residues predominate over residues lysine 371–valine 380. Residues histidine 468–serine 641 enclose the tr-type G domain. The tract at residues glycine 477–threonine 484 is G1. Residue glycine 477–threonine 484 coordinates GTP. Residues glycine 502–histidine 506 form a G2 region. The tract at residues aspartate 527–glycine 530 is G3. GTP contacts are provided by residues aspartate 527–histidine 531 and asparagine 581–aspartate 584. Residues asparagine 581–aspartate 584 are G4. A G5 region spans residues serine 617–leucine 619.

This sequence belongs to the TRAFAC class translation factor GTPase superfamily. Classic translation factor GTPase family. IF-2 subfamily.

The protein resides in the cytoplasm. One of the essential components for the initiation of protein synthesis. Protects formylmethionyl-tRNA from spontaneous hydrolysis and promotes its binding to the 30S ribosomal subunits. Also involved in the hydrolysis of GTP during the formation of the 70S ribosomal complex. In Picosynechococcus sp. (strain ATCC 27264 / PCC 7002 / PR-6) (Agmenellum quadruplicatum), this protein is Translation initiation factor IF-2.